Consider the following 128-residue polypeptide: Ribosome-binding factor A (128 aa).

Belongs to the RbfA family. In terms of assembly, monomer. Binds 30S ribosomal subunits, but not 50S ribosomal subunits or 70S ribosomes.

Its subcellular location is the cytoplasm. Functionally, one of several proteins that assist in the late maturation steps of the functional core of the 30S ribosomal subunit. Associates with free 30S ribosomal subunits (but not with 30S subunits that are part of 70S ribosomes or polysomes). Required for efficient processing of 16S rRNA. May interact with the 5'-terminal helix region of 16S rRNA. This is Ribosome-binding factor A from Acidithiobacillus ferrooxidans (strain ATCC 23270 / DSM 14882 / CIP 104768 / NCIMB 8455) (Ferrobacillus ferrooxidans (strain ATCC 23270)).